Consider the following 29-residue polypeptide: Cytochrome b6-f complex subunit 8 (29 aa).

Residues 3 to 23 (ILSLGWAALMTMFTFSLALTV) form a helical membrane-spanning segment.

This sequence belongs to the PetN family. The 4 large subunits of the cytochrome b6-f complex are cytochrome b6, subunit IV (17 kDa polypeptide, PetD), cytochrome f and the Rieske protein, while the 4 small subunits are PetG, PetL, PetM and PetN. The complex functions as a dimer.

Its subcellular location is the plastid. The protein resides in the chloroplast thylakoid membrane. Its function is as follows. Component of the cytochrome b6-f complex, which mediates electron transfer between photosystem II (PSII) and photosystem I (PSI), cyclic electron flow around PSI, and state transitions. The polypeptide is Cytochrome b6-f complex subunit 8 (Phaeodactylum tricornutum (strain CCAP 1055/1)).